The chain runs to 409 residues: Tryptophan synthase beta chain (409 aa).

Lys-98 bears the N6-(pyridoxal phosphate)lysine mark.

Belongs to the TrpB family. In terms of assembly, tetramer of two alpha and two beta chains. Requires pyridoxal 5'-phosphate as cofactor.

It catalyses the reaction (1S,2R)-1-C-(indol-3-yl)glycerol 3-phosphate + L-serine = D-glyceraldehyde 3-phosphate + L-tryptophan + H2O. Its pathway is amino-acid biosynthesis; L-tryptophan biosynthesis; L-tryptophan from chorismate: step 5/5. The beta subunit is responsible for the synthesis of L-tryptophan from indole and L-serine. This Jannaschia sp. (strain CCS1) protein is Tryptophan synthase beta chain.